Reading from the N-terminus, the 617-residue chain is Isopropyl malate synthase gloH (617 aa).

The 279-residue stretch at 47-325 folds into the Pyruvate carboxyltransferase domain; it reads PIWLSTDLRD…ETGLDFSDLL (279 aa).

The protein belongs to the alpha-IPM synthase/homocitrate synthase family. LeuA type 2 subfamily.

The catalysed reaction is 3-methyl-2-oxobutanoate + acetyl-CoA + H2O = (2S)-2-isopropylmalate + CoA + H(+). It functions in the pathway mycotoxin biosynthesis. In terms of biological role, 2-isopropylmalate synthase; part of the gene cluster that mediates the biosynthesis of pneumocandins, lipohexapeptides of the echinocandin family that prevent fungal cell wall formation by non-competitive inhibition of beta-1,3-glucan synthase. The 10,12-dimethylmyristoyl side chain is synthesized by the reducing polyketide synthase gloL/GLPKS4. The thioesterase gloN/GLHYD exclusively interacts with gloL/GLPKS4 to maintain turnover of the polyketide side chain. The 10R,12S-dimethylmyristic acid is then transferred to the first thiolation domain of the nonribosomal peptide synthetase gloA/GLNRPS4 by the acyl-AMP ligase gloD/GLligase, followed by its acylation to L-ornithine to trigger elongation of the cyclic hexapeptide. L-ornithine, 4R-hydroxyl-L-proline (generated from L-proline by the dioxygenase gloF/GLOXY2), 3S-hydroxyl-L-homotyrosine (generated by gloG/GLHtyB, gloH/GLHtyA, gloI/GLHtyC, gloJ/GLHtyD and hydroxylated at C-3 by the dioxygenase gloM/GLOXY1), 3R-hydroxyl-L-glutamine (generated from L-glutamine probably by the dioxygenase gloE/GLOXY3) and 3S-hydroxyl-L-proline (generated from L-proline by the dioxygenase gloF/GLOXY2 to yield pneumocandin B0), or 3S-hydroxyl-4S-methyl-L-proline (generated from L-leucine by the dioxygenase gloC/GLOXY4 to yield pneumocandin A0) are sequentially added to the growing chain. The last C domain of gloA/GLNRPS4 is proposed to be responsible for cyclization by condensation to form the peptide bond between L-ornithine and 3S-hydroxyl-4S-methyl-L-proline (for pneumocandin A0) or 3S-hydroxyl-L-proline (for pneumocandin B0). Finally, the subsequent C-4 hydroxylation of 3S-hydroxyl-L-homotyrosine and L-ornithine dihydroxylation at C-4 and C-5 are performed by the cytochrome P450 monooxygenases gloP/GLP450-1 and gloO/GLP450-2, respectively. This chain is Isopropyl malate synthase gloH, found in Glarea lozoyensis (strain ATCC 20868 / MF5171).